The primary structure comprises 321 residues: Mechanosensory protein 3 (321 aa).

LIM zinc-binding domains lie at 27–86 (NKCN…DHSI) and 87–152 (HRCA…QMDD). Positions 217 to 276 (RRGPRTTIKQNQLDVLNEMFSNTPKPSKHARAKLALETGLSMRVIQVWFQNRRSKERRLK) form a DNA-binding region, homeobox.

In terms of assembly, interacts with unc-86; the heterooligomer binds to the promoters of mec-3, mec-4 and mec-7. Expressed in the mechanosensory neurons ALML, ALMR, PLML, PLMR, AVM and PVM, and the FLPL and FLPR neurons.

The protein resides in the nucleus. Its function is as follows. Transcription factor. Specifies differentiation of the set of six touch receptor neurons (TRNs). May positively modulate expression of both its own gene and also of homeobox ARX homolog alr-1 in TRNs, forming a positive feedback loop with alr-1, thereby restricting the variability of expression of mec-3. Required to determine the identity of ALM sensory neurons, acting by interacting with unc-86, thereby preventing unc-86 cooperating with pag-3 to induce BDU-neuron specific genes. Binds cooperatively as a heterodimer with unc-86 to sites in the mec-3 gene promoter. Promotes outgrowth of lateral dendritic branches on the PVD nociceptive neurons, probably acting both directly, and upstream of zinc finger protein egl-46. In Caenorhabditis elegans, this protein is Mechanosensory protein 3 (mec-3).